Here is an 880-residue protein sequence, read N- to C-terminus: MTDSIQSSITPVNIEEELKSSYLDYAMSVIVGRALPDVRDGLKPVHRRVLFSMDREGNTANKKYVKSARVVGDVIGKYHPHGDSAVYDTIVRMAQPFSLRYMLVDGQGNFGSIDGDAPAAMRYTEVRMQKITQALLTDLDKETVNFSPNYDGELMIPDVLPTRIPALLANGSSGIAVGMATNIPPHNLNEVLNGCLAYIDKNEITIDELMQHIPGPDFPTAALINGRKGIEEAYRTGRGKVYVRARATVETNEKGREQIIVSELPYQVNKAKLVEKIAELIREKKIEGISNITDLSNKEGIRIEIDIKRDAVGEVVLNHLYSLTQMQVTFGINMVALDHGQPRLFNLKEIIEAFVLHRREVVTRRSIFELRKARERTHILEGLAVARSNIDEMIAIIRNSKNREEAATSISSRSWTLHSDIINLLDASARPDELEENLGIQGEQYYLSPAQVNAILELRLHRLTGIAFEEVIKEYEELLVKIADLLHILSSAERLMEVIREELEEVKAQFGDDRLTEITAASGDIDLEDLIAQEDVVVTLSHEGYVKYQPLTDYEAQRRGGKGKSATKMKEEDFIEKLLVANTHDTILCFSSRGRLYWLKVYQLPQASRGARGRPIVNILPLQENERITAILPVSAYEEDKFVVMATAGGIVKKIALTEFSRPRSNGIIALNLRDEDELIGVDITDGSNEIMLFSSQGRVVRFAENAVRAMGRLATGVRGIKLALTNDISDDESAVEIEDISDDNAEASLDLNIDKVVSLVVPKGEGAILTATQNGYGKRTQLSEYPTKSRNTKGVISIKVSERNGKVVAATQVEETDQIMLITDAGTLVRTRVSEVSIVGRNTQGVRLIRTADDEHVVSLERVCDADEDDSLEESSSEE.

A Topo IIA-type catalytic domain is found at 35 to 530 (LPDVRDGLKP…ASGDIDLEDL (496 aa)). The active-site O-(5'-phospho-DNA)-tyrosine intermediate is the Tyr-123. A GyrA-box motif is present at residues 557-563 (QRRGGKG).

This sequence belongs to the type II topoisomerase GyrA/ParC subunit family. In terms of assembly, heterotetramer, composed of two GyrA and two GyrB chains. In the heterotetramer, GyrA contains the active site tyrosine that forms a transient covalent intermediate with DNA, while GyrB binds cofactors and catalyzes ATP hydrolysis.

The protein localises to the cytoplasm. The enzyme catalyses ATP-dependent breakage, passage and rejoining of double-stranded DNA.. Its function is as follows. A type II topoisomerase that negatively supercoils closed circular double-stranded (ds) DNA in an ATP-dependent manner to modulate DNA topology and maintain chromosomes in an underwound state. Negative supercoiling favors strand separation, and DNA replication, transcription, recombination and repair, all of which involve strand separation. Also able to catalyze the interconversion of other topological isomers of dsDNA rings, including catenanes and knotted rings. Type II topoisomerases break and join 2 DNA strands simultaneously in an ATP-dependent manner. The sequence is that of DNA gyrase subunit A from Haemophilus influenzae (strain ATCC 51907 / DSM 11121 / KW20 / Rd).